The following is a 651-amino-acid chain: Chaperone protein dnaK1 (651 aa).

Residue T197 is modified to Phosphothreonine; by autocatalysis.

This sequence belongs to the heat shock protein 70 family.

Its function is as follows. Acts as a chaperone. This chain is Chaperone protein dnaK1 (dnaK1), found in Thermosynechococcus vestitus (strain NIES-2133 / IAM M-273 / BP-1).